The sequence spans 201 residues: Glycerol-3-phosphate acyltransferase (201 aa).

A run of 5 helical transmembrane segments spans residues 5-25 (LLGA…FGVV), 55-75 (KMGV…ILLA), 88-108 (WSTA…WLGF), 118-138 (LGIF…GYAV), and 164-184 (TYGV…LIFL).

This sequence belongs to the PlsY family. In terms of assembly, probably interacts with PlsX.

The protein localises to the cell inner membrane. The catalysed reaction is an acyl phosphate + sn-glycerol 3-phosphate = a 1-acyl-sn-glycero-3-phosphate + phosphate. Its pathway is lipid metabolism; phospholipid metabolism. Catalyzes the transfer of an acyl group from acyl-phosphate (acyl-PO(4)) to glycerol-3-phosphate (G3P) to form lysophosphatidic acid (LPA). This enzyme utilizes acyl-phosphate as fatty acyl donor, but not acyl-CoA or acyl-ACP. This chain is Glycerol-3-phosphate acyltransferase, found in Anaeromyxobacter dehalogenans (strain 2CP-C).